Here is a 281-residue protein sequence, read N- to C-terminus: NAC domain-containing protein 6 (281 aa).

The region spanning 4-156 is the NAC domain; sequence LPVGSRFCPT…QDALTGFADQ (153 aa). 2 disordered regions span residues 84–109 and 211–249; these read GGSE…QKGD and LEGH…VTQE. Over residues 94-109 the composition is skewed to basic and acidic residues; sequence NDGKKEIKDGHMQKGD. The DNA-binding element occupies 109–162; the sequence is DGLRASDDLQKVVLCRIRYKKEANVNEFGLVNHQAHQTQDALTGFADQLEMMLE. Positions 229 to 239 are enriched in low complexity; the sequence is QQQQQQQQQQQ.

It localises to the nucleus. This Arabidopsis thaliana (Mouse-ear cress) protein is NAC domain-containing protein 6 (NAC006).